A 165-amino-acid chain; its full sequence is LIM domain transcription factor LMO4.2 (165 aa).

2 LIM zinc-binding domains span residues lysine 21–asparagine 83 and glycine 85–asparagine 147.

Its function is as follows. Acts as a positive cofactor of GATA transcription factors to establish the identity of the ventral mesoderm during gastrulation. Down-regulation in the dorsal mesoderm is necessary for the proper formation of this territory since, when present, lmo4 may bind ldb1 and restrict the availability of this cofactor for Spemman organizer transcription factors. At neurula stages, suppresses primary neuron differentiation and modulates gene expression at the Isthmic Organizer of the midbrain-hindbrain boundary. This Xenopus tropicalis (Western clawed frog) protein is LIM domain transcription factor LMO4.2 (lmo4.2).